Consider the following 693-residue polypeptide: MAREFSLEKTRNIGIMAHVDAGKTTTTERILYYTGKIHKIGETHEGASQMDWMEQEQERGITITSAATTAQWNNHRVNIIDTPGHVDFTIEVQRSLRVLDGAVTVLDSQSGVEPQTETVWRQATEYGVPRIVFANKMDKIGADFLYSVSTLHDRLQANAHPIQLPIGSEDDFRGIIDLIKMKAEIYTNDLGTDILEEDIPAEYLDQAQEYREKLVEAVAETDEELMMKYLEGEEITNEELKAGIRKATINVEFFPVLCGSAFKNKGVQLMLDAVIDYLPSPLDIPAIKGINPDTDAEETRPASDEEPFAALAFKIMTDPFVGRLTFFRVYSGVLQSGSYVLNTSKGKRERIGRILQMHANSRQEIETVYSGDIAAAVGLKDTTTGDSLTDEKAKIILESINVPEPVIQLMVEPKSKADQDKMGIALQKLAEEDPTFRVETNVETGETVISGMGELHLDVLVDRMRREFKVEANVGAPQVSYRETFRASTQARGFFKRQSGGKGQFGDVWIEFTPNEEGKGFEFENAIVGGVVPREFIPAVEKGLVESMANGVLAGYPMVDVKAKLYDGSYHDVDSSETAFKIAASLALKEAAKSAQPAILEPMMLVTITVPEENLGDVMGHVTARRGRVDGMEAHGNSQIVRAYVPLAEMFGYATVLRSASQGRGTFMMVFDHYEDVPKSVQEEIIKKNKGED.

Residues 8 to 282 form the tr-type G domain; that stretch reads EKTRNIGIMA…AVIDYLPSPL (275 aa). GTP contacts are provided by residues 17–24, 81–85, and 135–138; these read AHVDAGKT, DTPGH, and NKMD.

The protein belongs to the TRAFAC class translation factor GTPase superfamily. Classic translation factor GTPase family. EF-G/EF-2 subfamily.

It is found in the cytoplasm. Functionally, catalyzes the GTP-dependent ribosomal translocation step during translation elongation. During this step, the ribosome changes from the pre-translocational (PRE) to the post-translocational (POST) state as the newly formed A-site-bound peptidyl-tRNA and P-site-bound deacylated tRNA move to the P and E sites, respectively. Catalyzes the coordinated movement of the two tRNA molecules, the mRNA and conformational changes in the ribosome. The sequence is that of Elongation factor G from Streptococcus pneumoniae (strain P1031).